Here is a 320-residue protein sequence, read N- to C-terminus: Ferrochelatase (320 aa).

The Fe cation site is built by His194 and Glu275.

Belongs to the ferrochelatase family. In terms of assembly, monomer.

It is found in the cytoplasm. It catalyses the reaction heme b + 2 H(+) = protoporphyrin IX + Fe(2+). The protein operates within porphyrin-containing compound metabolism; protoheme biosynthesis; protoheme from protoporphyrin-IX: step 1/1. Functionally, catalyzes the ferrous insertion into protoporphyrin IX. The protein is Ferrochelatase of Salmonella paratyphi A (strain ATCC 9150 / SARB42).